A 308-amino-acid polypeptide reads, in one-letter code: Tetraacyldisaccharide 4'-kinase (308 aa).

Residue 63–70 participates in ATP binding; the sequence is SFGGNGKT.

It belongs to the LpxK family.

The enzyme catalyses a lipid A disaccharide + ATP = a lipid IVA + ADP + H(+). The protein operates within glycolipid biosynthesis; lipid IV(A) biosynthesis; lipid IV(A) from (3R)-3-hydroxytetradecanoyl-[acyl-carrier-protein] and UDP-N-acetyl-alpha-D-glucosamine: step 6/6. Its function is as follows. Transfers the gamma-phosphate of ATP to the 4'-position of a tetraacyldisaccharide 1-phosphate intermediate (termed DS-1-P) to form tetraacyldisaccharide 1,4'-bis-phosphate (lipid IVA). The polypeptide is Tetraacyldisaccharide 4'-kinase (Campylobacter jejuni (strain RM1221)).